Consider the following 386-residue polypeptide: Protein salvador homolog 1 (386 aa).

Phosphoserine occurs at positions 95 and 137. WW domains follow at residues 200 to 233 and 235 to 268; these read LPLP…HPLE and EGLP…HPCA. T211 is modified (phosphothreonine). Positions 322–369 constitute an SARAH domain; it reads ILKWELFQLADLDTYQGMLKLLFMKELEQIVKLYEAYRQALLTELENR. The stretch at 345-374 forms a coiled coil; sequence MKELEQIVKLYEAYRQALLTELENRKQRQQ.

As to quaternary structure, homodimer. Stabilized through interaction with STK3/MST2 or STK4/MST1. Interacts (via SARAH domain) with isoform 1 of NEK2. Interacts with ESR1 only in the presence of STK3/MST2. Interacts with WTIP and AJUBA. Post-translationally, phosphorylated by STK3/MST2 and STK4/MST1. Phosphorylation is not required for SAV1 stability and may increase the number of protein binding sites on the scaffold molecule. In terms of tissue distribution, ubiquitously expressed in adult tissues with the highest level found in testis.

Its subcellular location is the nucleus. The protein localises to the cytoplasm. Regulator of STK3/MST2 and STK4/MST1 in the Hippo signaling pathway which plays a pivotal role in organ size control and tumor suppression by restricting proliferation and promoting apoptosis. The core of this pathway is composed of a kinase cascade wherein STK3/MST2 and STK4/MST1, in complex with its regulatory protein SAV1, phosphorylates and activates LATS1/2 in complex with its regulatory protein MOB1, which in turn phosphorylates and inactivates YAP1 oncoprotein and WWTR1/TAZ. Phosphorylation of YAP1 by LATS1/2 inhibits its translocation into the nucleus to regulate cellular genes important for cell proliferation, cell death, and cell migration. SAV1 is required for STK3/MST2 and STK4/MST1 activation and promotes cell-cycle exit and terminal differentiation in developing epithelial tissues. Plays a role in centrosome disjunction by regulating the localization of NEK2 to centrosomes, and its ability to phosphorylate CROCC and CEP250. In conjunction with STK3/MST2, activates the transcriptional activity of ESR1 through the modulation of its phosphorylation. In Mus musculus (Mouse), this protein is Protein salvador homolog 1 (Sav1).